Consider the following 216-residue polypeptide: LexA repressor (216 aa).

The H-T-H motif DNA-binding region spans 29–49 (RAEIAQALGFRSPNAAEDHLK). Residues Ser-134 and Lys-171 each act as for autocatalytic cleavage activity in the active site.

Belongs to the peptidase S24 family. In terms of assembly, homodimer.

The catalysed reaction is Hydrolysis of Ala-|-Gly bond in repressor LexA.. Its function is as follows. Represses a number of genes involved in the response to DNA damage (SOS response), including recA and lexA. In the presence of single-stranded DNA, RecA interacts with LexA causing an autocatalytic cleavage which disrupts the DNA-binding part of LexA, leading to derepression of the SOS regulon and eventually DNA repair. This Bordetella parapertussis (strain 12822 / ATCC BAA-587 / NCTC 13253) protein is LexA repressor.